The sequence spans 362 residues: Protein Tob1 (362 aa).

The Bipartite nuclear localization signal signature appears at 22–39 (RRRVNIFGEELERLLKKK). Residues 82 to 92 (VRGNLPQDLSV) are important for nuclear localization. Residues 144–160 (DPASSVSSSPSPPFGHS) show a composition bias toward low complexity. Residues 144-171 (DPASSVSSSPSPPFGHSAAVSPTFMPRS) are disordered. Positions 161–220 (AAVSPTFMPRSTQPLTFTTATFAATKFGSTKMKNSGRSSKVARTSPINLGLTVNVNDLLK) are required for interaction with CPEB3. At Thr204 the chain carries Phosphothreonine. The short motif at 228-236 (VHSLYGLGL) is the Nuclear export signal element. The disordered stretch occupies residues 234 to 284 (LGLGSQQQPQPQPQQQQQQQPSSSQPPPPLPQQQQQQPQQQQQQQQQTSAL). 2 stretches are compositionally biased toward low complexity: residues 238–256 (SQQQ…QPSS) and 265–280 (QQQQ…QQQQ).

The protein belongs to the BTG family. In terms of assembly, interacts with ERBB2. Interacts with CNOT7. Interacts with CPEB3 (via C-terminal RNA-binding region); recruits CNOT7 to CPEB3 to form a ternary complex required for mRNA deadenylation and decay. Interacts with CNOT8. Interacts with CPEB4. In terms of processing, phosphorylated on Ser and Thr residues. Ubiquitous.

The protein localises to the cytoplasm. Its subcellular location is the nucleus. Its function is as follows. Anti-proliferative protein; the function is mediated by association with deadenylase subunits of the CCR4-NOT complex. Mediates CPEB3-accelerated mRNA deadenylation by binding to CPEB3 and recruiting CNOT7 which leads to target mRNA deadenylation and decay. The chain is Protein Tob1 (Tob1) from Mus musculus (Mouse).